The following is a 290-amino-acid chain: uncharacterized protein (290 aa).

The protein belongs to the glycosyltransferase 2 family.

This is an uncharacterized protein from Methanocaldococcus jannaschii (strain ATCC 43067 / DSM 2661 / JAL-1 / JCM 10045 / NBRC 100440) (Methanococcus jannaschii).